The chain runs to 61 residues: Sperm protamine P1 (61 aa).

The disordered stretch occupies residues 1-61 (MARFRRSRSR…RSSRRSRRRN (61 aa)).

Belongs to the protamine P1 family. As to expression, testis.

It localises to the nucleus. The protein resides in the chromosome. Its function is as follows. Protamines substitute for histones in the chromatin of sperm during the haploid phase of spermatogenesis. They compact sperm DNA into a highly condensed, stable and inactive complex. The polypeptide is Sperm protamine P1 (PRM1) (Ornithorhynchus anatinus (Duckbill platypus)).